Here is a 233-residue protein sequence, read N- to C-terminus: Small ribosomal subunit protein uS2c (233 aa).

The protein belongs to the universal ribosomal protein uS2 family.

The protein resides in the plastid. The protein localises to the chloroplast. The chain is Small ribosomal subunit protein uS2c (rps2) from Galdieria sulphuraria (Red alga).